The following is a 409-amino-acid chain: Sex-determination protein fem-3 (409 aa).

In terms of assembly, component of a complex containing fem-1, fem-2 and fem-3. Interacts with fem-1 and fem-2 (via N-terminus). Part of a E3 ubiquitin-protein ligase complex, at least composed of cul-2, elc-1, tra-1, fem-1, fem-2 and fem-3; mediates the ubiquitination and subsequent proteasomal degradation of tra-1. Interacts with sel-10. Interacts with tra-2.

In terms of biological role, required for male development. In XO (male) animals, fem-3 directs male differentiation in all tissues. In XX (hermaphrodite animals), it specifies the first 80 or so germ cells to be sperm. Negatively regulates male development when bound to tra-2. The chain is Sex-determination protein fem-3 from Caenorhabditis briggsae.